The sequence spans 600 residues: Glutamine--fructose-6-phosphate aminotransferase [isomerizing] (600 aa).

The active-site Nucleophile; for GATase activity is the Cys-2. Positions 2–217 constitute a Glutamine amidotransferase type-2 domain; that stretch reads CGIVGFIGEQ…DKEIVIVMKE (216 aa). SIS domains follow at residues 283–422 and 452–590; these read IRNA…AKGE and LAKQ…VDKP. Lys-595 acts as the For Fru-6P isomerization activity in catalysis.

In terms of assembly, homodimer.

Its subcellular location is the cytoplasm. The enzyme catalyses D-fructose 6-phosphate + L-glutamine = D-glucosamine 6-phosphate + L-glutamate. Its function is as follows. Catalyzes the first step in hexosamine metabolism, converting fructose-6P into glucosamine-6P using glutamine as a nitrogen source. The polypeptide is Glutamine--fructose-6-phosphate aminotransferase [isomerizing] (Bacillus thuringiensis subsp. konkukian (strain 97-27)).